Here is a 663-residue protein sequence, read N- to C-terminus: Protein KINESIN LIGHT CHAIN-RELATED 2 (663 aa).

Basic and acidic residues predominate over residues 1 to 14; that stretch reads MDVGESNERVKDDS. Disordered regions lie at residues 1–24 and 86–146; these read MDVG…RSPL and GESK…KVSV. S19 bears the Phosphoserine mark. Residues 86 to 100 are compositionally biased toward basic and acidic residues; sequence GESKKEIILEKKEES. The segment covering 102-111 has biased composition (polar residues); it reads GEGSLSQKKP. 11 TPR repeats span residues 147-181, 200-233, 243-276, 285-318, 329-363, 369-402, 411-444, 454-487, 495-528, 537-570, and 579-612; these read DEES…ALRA, VMSL…PMIE, FAGC…QRQV, GETC…HKEN, AADR…SSQN, AAVD…FKQG, ALVY…YLKP, ATGF…YANA, AGIE…FRNS, GIAL…LEKE, and LAVY…REEK.

This sequence belongs to the kinesin light chain family.

This is Protein KINESIN LIGHT CHAIN-RELATED 2 from Arabidopsis thaliana (Mouse-ear cress).